Consider the following 440-residue polypeptide: MKPLTSLLLSAALSAAAPHPASPQAPLADIPSIVGETRTEFSQNSLDDVVNASPLLSFHRDLVSIESISGNEGAAGAFVADFLASHNFTVIKQPVTTESDARFNIFAIPESQYHSLDESHSSHSPQILLTSHIDTVPPFIPYSLHRDANDTDDRNILIAGRGTVDAKGSVAAQIFAALDILAAQPSAPLGLLFVVGEETGGDGMKAFSQSTHLNPSPSRFHTVIFGEPTELALVAGHKGMLGFEVAAHGHAAHSGYPWLGESAISAILPALARVDQLGDIPVEEGGLPASDKYGRTTVNIGRMEGGVATNVVPSKARAGVAVRLAAGTHDEAREVVLKAVRDVTGGDDRVVVNFSLEGYGPQDLDTDVPGFNITTVNYGTDVPNLQLHPRPDGKVRRYLYGPGTIHVAHGDNEALTVAQLEEAVRGYKKLIQAALDRSAS.

The N-terminal stretch at 1-16 (MKPLTSLLLSAALSAA) is a signal peptide. 2 N-linked (GlcNAc...) asparagine glycosylation sites follow: asparagine 87 and asparagine 149. Residue aspartate 165 participates in Zn(2+) binding. Residue glutamate 197 is the Proton acceptor of the active site. Glutamate 198 is a binding site for Zn(2+). N-linked (GlcNAc...) asparagine glycans are attached at residues asparagine 353 and asparagine 372.

The protein belongs to the peptidase M20A family. Requires Zn(2+) as cofactor.

It localises to the secreted. The polypeptide is Probable carboxypeptidase AFUB_072730 (Aspergillus fumigatus (strain CBS 144.89 / FGSC A1163 / CEA10) (Neosartorya fumigata)).